Here is a 697-residue protein sequence, read N- to C-terminus: Exocyst complex component 7 (697 aa).

The SEC8 and ARHQ binding stretch occupies residues 1–384 (MIPPQEASAR…FSTVLTVFPI (384 aa)). 2 coiled-coil regions span residues 5 to 42 (QEAS…TRNM) and 63 to 85 (VHKQ…SCLD). At Ser133 the chain carries Phosphoserine. Residues 238 to 270 (FRKSSSSSGVPYSPAIPNKRKDTPTKKPIKRPG) are disordered.

The protein belongs to the EXO70 family. As to quaternary structure, the exocyst complex is composed of EXOC1, EXOC2, EXOC3, EXOC4, EXOC5, EXOC6, EXOC7 and EXOC8. Interacts with RAB11FIP3. Interacts with ARHQ in a GTP-dependent manner.

The protein resides in the cytoplasm. It is found in the cytosol. Its subcellular location is the cell membrane. It localises to the midbody. The protein localises to the midbody ring. Component of the exocyst complex involved in the docking of exocytic vesicles with fusion sites on the plasma membrane. In adipocytes, plays a crucial role in targeting SLC2A4 vesicle to the plasma membrane in response to insulin, perhaps directing the vesicle to the precise site of fusion. It is required for neuron survival and plays an essential role in cortical development. The polypeptide is Exocyst complex component 7 (Exoc7) (Mus musculus (Mouse)).